We begin with the raw amino-acid sequence, 178 residues long: MSTRKLQKRKILPNDSIYNSLLVSQTINKILSKGKKNIARYIFYKSMQNIEKIKNENPLDIFKKAVDNATPSIELRTQKRKKGQISKISIKTKLERRNKIALKFIINSAKKRSEKNIIQKLQGEILDAYNNTGAAVQKKEEIEKSKSPVNNNKKFISKNKKSKNKKQKKRLKRKKNIY.

A compositionally biased stretch (basic and acidic residues) spans 137-146 (QKKEEIEKSK). The segment at 137 to 178 (QKKEEIEKSKSPVNNNKKFISKNKKSKNKKQKKRLKRKKNIY) is disordered. The span at 155–178 (FISKNKKSKNKKQKKRLKRKKNIY) shows a compositional bias: basic residues.

The protein belongs to the universal ribosomal protein uS7 family. In terms of assembly, part of the 30S ribosomal subunit.

The protein resides in the plastid. One of the primary rRNA binding proteins, it binds directly to 16S rRNA where it nucleates assembly of the head domain of the 30S subunit. This is Small ribosomal subunit protein uS7c (rps7) from Euglena longa (Euglenophycean alga).